The following is a 1523-amino-acid chain: ATP-binding cassette sub-family C member 3 (1523 aa).

The Extracellular portion of the chain corresponds to 1-35 (MDRLCGSGELGSKFWDSNLSIYTNTPDLTPCFQNS). Asn18 carries an N-linked (GlcNAc...) asparagine glycan. A helical membrane pass occupies residues 36–56 (LLAWVPCIYLWAALPCYLFYL). The Cytoplasmic segment spans residues 57-75 (RHHQLGYIVLSWLSRLKTA). Residues 76-96 (LGVLLWCVSWVDLFYSFHGLI) form a helical membrane-spanning segment. At 97-102 (HGSSPA) the chain is on the extracellular side. Residues 103–123 (PVFFVTPLVVGITMLLATLLI) form a helical membrane-spanning segment. Over 124–129 (QYERLR) the chain is Cytoplasmic. The chain crosses the membrane as a helical span at residues 130–150 (GVQSSGVLIIFWLLCVICAII). The Extracellular portion of the chain corresponds to 151–170 (PFRSKILSALAEGKILDPFR). A helical transmembrane segment spans residues 171–191 (FTTFYIYFALVFCALILSCFK). The Cytoplasmic segment spans residues 192-301 (EKPPLFSPEN…KSKQPSFLRA (110 aa)). Residues 302 to 324 (LVRTFTSSLLMSACFNLIQNLLG) traverse the membrane as a helical segment. Residues 310 to 593 (LLMSACFNLI…LPQLISGLTQ (284 aa)) form the ABC transmembrane type-1 1 domain. The Extracellular portion of the chain corresponds to 325–345 (FVNPQLLSILIRFISDPTAPT). Residues 346-366 (WWGFLLAGLMFLSSTMQTLIL) traverse the membrane as a helical segment. Residues 367–419 (HQYYHCIFVMALRLRTAIIGVIYRKALVITNSVKRESTVGEMVNLMSVDAQRF) lie on the Cytoplasmic side of the membrane. A helical transmembrane segment spans residues 420 to 440 (MDVSPFINLLWSAPLQVILAI). Tyr441 is a topological domain (extracellular). Residues 442–462 (FLWQILGPSALAGVAVIVLLI) traverse the membrane as a helical segment. Residues 463–535 (PLNGAVSMKM…KGAYLQAIST (73 aa)) lie on the Cytoplasmic side of the membrane. A helical membrane pass occupies residues 536-556 (FIWICTPFLVTLITLGVYVYV). Over 557–567 (DESNVLDAEKA) the chain is Extracellular. Residues 568–588 (FVSLSLFNILKIPLNMLPQLI) form a helical membrane-spanning segment. Topologically, residues 589 to 967 (SGLTQASVSL…YAKSMGLCTT (379 aa)) are cytoplasmic. The ABC transporter 1 domain occupies 626–850 (ITIHNGTFTW…DGSFANFLRN (225 aa)). 660–667 (GPVGCGKS) provides a ligand contact to ATP. Ser903 and Ser906 each carry phosphoserine. Over residues 903–915 (SSLSSEGEVQNRT) the composition is skewed to polar residues. The segment at 903-923 (SSLSSEGEVQNRTMPKKHTNS) is disordered. Residues 967–1248 (TLSICLLYGG…MIRMISDLES (282 aa)) enclose the ABC transmembrane type-1 2 domain. The chain crosses the membrane as a helical span at residues 968–988 (LSICLLYGGQSAAAIGANVWL). Topologically, residues 989–1013 (SAWSNDAEEHGQQNKTSVRLGVYAA) are extracellular. Asn1002 carries N-linked (GlcNAc...) asparagine glycosylation. Residues 1014-1034 (LGILQGLLVMLSAFTMVVGAI) traverse the membrane as a helical segment. The Cytoplasmic portion of the chain corresponds to 1035 to 1071 (QAARLLHEALLHNKIRSPQSFFDTTPSGRILNRFSKD). Residues 1072–1092 (IYVIDEVLAPTILMLLNSFFT) form a helical membrane-spanning segment. Topologically, residues 1093–1096 (SIST) are extracellular. A helical membrane pass occupies residues 1097-1117 (IMVIVASTPLFMVVVLPLAVL). Topologically, residues 1118 to 1191 (YGFVQRFYVA…YPYIASNRWL (74 aa)) are cytoplasmic. A helical membrane pass occupies residues 1192–1212 (GVHVEFVGNCVVLFAALFAVI). The Extracellular segment spans residues 1213-1219 (GRNSLNP). Residues 1220–1240 (GLVGLSVSYALQVTMALNWMI) traverse the membrane as a helical segment. At 1241–1523 (RMISDLESNI…YGMAKDAGLA (283 aa)) the chain is on the cytoplasmic side. Residues 1287–1519 (FRNYSVRYRP…GGIFYGMAKD (233 aa)) form the ABC transporter 2 domain. 1319–1326 (GRTGAGKS) is an ATP binding site.

Belongs to the ABC transporter superfamily. ABCC family. Conjugate transporter (TC 3.A.1.208) subfamily. As to expression, detected throughout the gastrointestinal tract, liver, lung, pancreas, bladder, gall bladder and at low levels in the adrenal gland.

The protein resides in the basolateral cell membrane. It localises to the basal cell membrane. It catalyses the reaction an S-substituted glutathione(in) + ATP + H2O = an S-substituted glutathione(out) + ADP + phosphate + H(+). The enzyme catalyses ATP + H2O + xenobioticSide 1 = ADP + phosphate + xenobioticSide 2.. It carries out the reaction 17beta-estradiol 17-O-(beta-D-glucuronate)(in) + ATP + H2O = 17beta-estradiol 17-O-(beta-D-glucuronate)(out) + ADP + phosphate + H(+). The catalysed reaction is dehydroepiandrosterone 3-sulfate(in) + ATP + H2O = dehydroepiandrosterone 3-sulfate(out) + ADP + phosphate + H(+). It catalyses the reaction leukotriene C4(in) + ATP + H2O = leukotriene C4(out) + ADP + phosphate + H(+). The enzyme catalyses taurocholate(in) + ATP + H2O = taurocholate(out) + ADP + phosphate + H(+). It carries out the reaction glycocholate(in) + ATP + H2O = glycocholate(out) + ADP + phosphate + H(+). The catalysed reaction is taurolithocholate 3-sulfate(in) + ATP + H2O = taurolithocholate 3-sulfate(out) + ADP + phosphate + H(+). It catalyses the reaction taurochenodeoxycholate 3-sulfate(in) + ATP + H2O = taurochenodeoxycholate 3-sulfate(out) + ADP + phosphate + H(+). The enzyme catalyses (4Z,15Z)-bilirubin IXalpha C8-beta-D-glucuronoside(in) + ATP + H2O = (4Z,15Z)-bilirubin IXalpha C8-beta-D-glucuronoside(out) + ADP + phosphate + H(+). It carries out the reaction (4Z,15Z)-bilirubin IXalpha C8,C12-beta-D-bisglucuronoside(in) + ATP + H2O = (4Z,15Z)-bilirubin IXalpha C8,C12-beta-D-bisglucuronoside(out) + ADP + phosphate + H(+). ATP-dependent transporter of the ATP-binding cassette (ABC) family that binds and hydrolyzes ATP to enable active transport of various substrates including many drugs, toxicants and endogenous compound across cell membranes. Transports glucuronide conjugates such as bilirubin diglucuronide, estradiol-17-beta-o-glucuronide and GSH conjugates such as leukotriene C4 (LTC4). Transports also various bile salts (taurocholate, glycocholate, taurochenodeoxycholate-3-sulfate, taurolithocholate- 3-sulfate). Does not contribute substantially to bile salt physiology but provides an alternative route for the export of bile acids and glucuronides from cholestatic hepatocytes. May contribute to regulate the transport of organic compounds in testes across the blood-testis-barrier. In Mus musculus (Mouse), this protein is ATP-binding cassette sub-family C member 3 (Abcc3).